The following is a 392-amino-acid chain: GTPase Obg (392 aa).

In terms of domain architecture, Obg spans M1 to L159. An OBG-type G domain is found at A160 to E333. GTP-binding positions include G166 to S173, F191 to V195, D213 to G216, N283 to D286, and S314 to A316. Mg(2+) contacts are provided by S173 and T193. Positions S361 to P392 are disordered. The segment covering F365–V386 has biased composition (acidic residues).

It belongs to the TRAFAC class OBG-HflX-like GTPase superfamily. OBG GTPase family. Monomer. The cofactor is Mg(2+).

Its subcellular location is the cytoplasm. Its function is as follows. An essential GTPase which binds GTP, GDP and possibly (p)ppGpp with moderate affinity, with high nucleotide exchange rates and a fairly low GTP hydrolysis rate. Plays a role in control of the cell cycle, stress response, ribosome biogenesis and in those bacteria that undergo differentiation, in morphogenesis control. The sequence is that of GTPase Obg from Histophilus somni (strain 2336) (Haemophilus somnus).